A 215-amino-acid polypeptide reads, in one-letter code: Ras-related protein Rab-5A (215 aa).

10 residues coordinate GTP: serine 29, alanine 30, glycine 32, lysine 33, serine 34, serine 35, histidine 46, glutamate 47, threonine 52, and glycine 78. Serine 34 contributes to the Mg(2+) binding site. Short sequence motifs (switch) lie at residues 44-56 and 77-93; these read QFHE…IGAA and AGQE…YRGA. Threonine 52 is a Mg(2+) binding site. Serine 84 carries the post-translational modification Phosphoserine. GTP contacts are provided by asparagine 133, lysine 134, aspartate 136, alanine 164, and lysine 165. The segment at 181 to 215 is disordered; the sequence is LPKNEPQNPGANSARGRGVDLTEPAQPARSQCCSN. Residues cysteine 212 and cysteine 213 are each lipidated (S-geranylgeranyl cysteine).

This sequence belongs to the small GTPase superfamily. Rab family. Interacts with GDI1; this promotes dissociation from membranes; phosphorylation at Ser-84 disrupts this interaction. Interacts with GDI2; phosphorylation at Ser-84 disrupts the interaction. Interacts with EEA1. Interacts with RIN1 and GAPVD1, which regulate its pathway, probably by acting as a GEF. Interacts with RINL. Interacts with ALS2CL, SUN2, ZFYVE20 and RUFY1. Interacts with RABEP1; one RABEP1 homodimer binds two RAB5A chains, but at opposite sides of the dimer. Interacts with SGSM1 and SGSM3. Interacts with PIK3CB. Interacts with OCRL and INPP5F. May be a component of a complex composed of RAB5A, DYN2 and PIK3C3. Does not interact with BLOC-3 complex (heterodimer of HPS1 and HPS4). Interacts with CLN5. Interacts with APPL2. Interacts with F8A1/F8A2/F8A3. Found in a complex with F8A1/F8A2/F8A3, HTT and RAB5A; mediates the recruitment of HTT by RAB5A onto early endosomes. Interacts with ATP9A. Interacts with PPP1R21; mediates the recruitment of FERRY complex by RAB5A onto early endosomes. Mg(2+) is required as a cofactor. In terms of processing, phosphorylation of Ser-84 in the switch II region by LRRK2 prevents the association of RAB regulatory proteins, including RAB GDP dissociation inhibitors GDI1 and GDI2.

The protein localises to the cell membrane. It is found in the early endosome membrane. The protein resides in the melanosome. Its subcellular location is the cytoplasmic vesicle. It localises to the cell projection. The protein localises to the ruffle. It is found in the membrane. The protein resides in the cytoplasm. Its subcellular location is the cytosol. It localises to the phagosome membrane. The protein localises to the endosome membrane. The catalysed reaction is GTP + H2O = GDP + phosphate + H(+). Regulated by guanine nucleotide exchange factors (GEFs) including RINL, which promote the exchange of bound GDP for free GTP. Regulated by GTPase activating proteins (GAPs) which increase the GTP hydrolysis activity. Inhibited by GDP dissociation inhibitors (GDIs). Functionally, the small GTPases Rab are key regulators of intracellular membrane trafficking, from the formation of transport vesicles to their fusion with membranes. Rabs cycle between an inactive GDP-bound form and an active GTP-bound form that is able to recruit to membranes different sets of downstream effectors directly responsible for vesicle formation, movement, tethering and fusion. RAB5A is required for the fusion of plasma membranes and early endosomes. Contributes to the regulation of filopodia extension. Required for the exosomal release of SDCBP, CD63, PDCD6IP and syndecan. Regulates maturation of apoptotic cell-containing phagosomes, probably downstream of DYN2 and PIK3C3. This is Ras-related protein Rab-5A from Mus musculus (Mouse).